We begin with the raw amino-acid sequence, 226 residues long: 2-amino-5-formylamino-6-ribosylaminopyrimidin-4(3H)-one 5'-monophosphate deformylase (226 aa).

Fe cation contacts are provided by Glu29, His31, Asp40, and His108.

The protein belongs to the creatininase superfamily. FAPy deformylase family. As to quaternary structure, homodimer. Fe(2+) serves as cofactor. Requires Zn(2+) as cofactor.

It carries out the reaction 2-amino-5-formylamino-6-(5-phospho-D-ribosylamino)pyrimidin-4(3H)-one + H2O = 2,5-diamino-6-(1-D-ribosylamino)pyrimidin-4(3H)-one 5'-phosphate + formate + H(+). It functions in the pathway cofactor biosynthesis; coenzyme F420 biosynthesis. Its pathway is cofactor biosynthesis; riboflavin biosynthesis. Its function is as follows. Catalyzes the hydrolysis of the formamide of 2-amino-5-formylamino-6-ribosylamino-4(3H)-pyrimidinone 5'-monophosphate (FAPy) to form 2,5-diamino-6-ribosylamino-4(3H)-pyrimidinone 5'-phosphate (APy). The chain is 2-amino-5-formylamino-6-ribosylaminopyrimidin-4(3H)-one 5'-monophosphate deformylase from Methanocaldococcus vulcanius (strain ATCC 700851 / DSM 12094 / M7) (Methanococcus vulcanius).